The primary structure comprises 534 residues: Endoglucanase 5 (534 aa).

Residues 1 to 27 form the signal peptide; that stretch reads MSDVSGRFVVAAAVVAVSLAMAAAAAA. The active-site Nucleophile is D82. Active-site residues include H432, D484, and E493. The interval 515-534 is disordered; that stretch reads RRRGEDAPPSSTSPVAEDDL.

Belongs to the glycosyl hydrolase 9 (cellulase E) family.

It localises to the secreted. It catalyses the reaction Endohydrolysis of (1-&gt;4)-beta-D-glucosidic linkages in cellulose, lichenin and cereal beta-D-glucans.. The sequence is that of Endoglucanase 5 from Oryza sativa subsp. japonica (Rice).